A 248-amino-acid chain; its full sequence is UPF0736 protein BCE33L1074 (248 aa).

This sequence belongs to the UPF0736 family.

In Bacillus cereus (strain ZK / E33L), this protein is UPF0736 protein BCE33L1074.